The primary structure comprises 123 residues: uncharacterized protein (123 aa).

The Rhodanese domain maps to 17-117 (SNDNAFLVDV…NNQDKGWKQN (101 aa)).

This is an uncharacterized protein from Rickettsia conorii (strain ATCC VR-613 / Malish 7).